We begin with the raw amino-acid sequence, 430 residues long: Serine--tRNA ligase (430 aa).

237 to 239 contributes to the L-serine binding site; sequence TAE. ATP is bound at residue 268-270; the sequence is RSE. An L-serine-binding site is contributed by Glu-291. 355 to 358 is a binding site for ATP; sequence EISS. Residue Ser-391 coordinates L-serine.

This sequence belongs to the class-II aminoacyl-tRNA synthetase family. Type-1 seryl-tRNA synthetase subfamily. As to quaternary structure, homodimer. The tRNA molecule binds across the dimer.

Its subcellular location is the cytoplasm. The catalysed reaction is tRNA(Ser) + L-serine + ATP = L-seryl-tRNA(Ser) + AMP + diphosphate + H(+). It catalyses the reaction tRNA(Sec) + L-serine + ATP = L-seryl-tRNA(Sec) + AMP + diphosphate + H(+). Its pathway is aminoacyl-tRNA biosynthesis; selenocysteinyl-tRNA(Sec) biosynthesis; L-seryl-tRNA(Sec) from L-serine and tRNA(Sec): step 1/1. In terms of biological role, catalyzes the attachment of serine to tRNA(Ser). Is also able to aminoacylate tRNA(Sec) with serine, to form the misacylated tRNA L-seryl-tRNA(Sec), which will be further converted into selenocysteinyl-tRNA(Sec). The polypeptide is Serine--tRNA ligase (Yersinia pseudotuberculosis serotype O:1b (strain IP 31758)).